Consider the following 735-residue polypeptide: Catalase-peroxidase (735 aa).

A cross-link (tryptophyl-tyrosyl-methioninium (Trp-Tyr) (with M-246)) is located at residues 97-220; the sequence is WHAAGTYRIG…LAAVQMGLIY (124 aa). The active-site Proton acceptor is His-98. The tryptophyl-tyrosyl-methioninium (Tyr-Met) (with W-97) cross-link spans 220–246; it reads YVNPEGPNGKPDPMAAAHDIRETFGRM. His-261 lines the heme b pocket. The interval 342–362 is disordered; sequence AHQWTPKNPEAASTVPDAHDP.

This sequence belongs to the peroxidase family. Peroxidase/catalase subfamily. Homodimer or homotetramer. Heme b serves as cofactor. Post-translationally, formation of the three residue Trp-Tyr-Met cross-link is important for the catalase, but not the peroxidase activity of the enzyme.

It catalyses the reaction H2O2 + AH2 = A + 2 H2O. The catalysed reaction is 2 H2O2 = O2 + 2 H2O. Functionally, bifunctional enzyme with both catalase and broad-spectrum peroxidase activity. The polypeptide is Catalase-peroxidase (Gloeobacter violaceus (strain ATCC 29082 / PCC 7421)).